A 531-amino-acid chain; its full sequence is Acyl-CoA ligase azaF (531 aa).

188–199 (RLFSSGTTGLPK) contacts AMP. An AMP-binding region spans residues 449 to 525 (EVEGVLRNHP…DAIPRNASGK (77 aa)).

This sequence belongs to the ATP-dependent AMP-binding enzyme family.

Its pathway is secondary metabolite biosynthesis. Functionally, acyl-CoA ligase; part of the gene cluster that mediates the biosynthesis of azaphilones, a class of fungal metabolites characterized by a highly oxygenated pyrano-quinone bicyclic core and exhibiting a broad range of bioactivities. In the first step, the non-reducing polyketide synthase azaA forms the hexaketide precursor from successive condensations of five malonyl-CoA units, presumably with a simple acetyl-CoA starter unit. The reactive polyketide chain then undergoes a PT-mediated C2-C7 cyclization to afford the aromatic ring and is eventually released as an aldehyde through the R-domain. The putative ketoreductase azaE is proposed to catalyze the reduction of the terminal ketone resulting in the early culture product FK17-P2a. The monooxygenase azaH was demonstrated to be the only enzyme required to convert FK17-P2a to azanigerone E. AzaH first hydroxylates the benzaldehyde intermediate FK17-P2a at C4, which triggers the formation of the pyran-ring to afford azanigerone E. In parallel, the 2,4-dimethylhexanoyl chain is synthesized by the HR-PKS azaB and is proposed to be transferred to the C4-hydroxyl of azanigerone E by the acyltransferase azaD directly from the ACP domain of azaB. Alternatively, the 2,4-dimethyl-hexanoyl chain may be offloaded from the HR-PKS as a carboxylic acid and converted to an acyl-CoA by azaF. The resulting acyl-CoA molecule could then be taken up as a substrate by AzaD to form azanigerone B. To yield the carboxylic acid substituent in azanigerone A, the hydroxypropyl side chain of azanigerone B would need to undergo a C-C oxidative cleavage catalyzed by cytochrome P450 AzaI. AzaI is proposed to act on a vicinal diol that leads to a C-C bond scission either through an alkoxyradical intermediate or a peroxy complex. In the biosynthesis of azanigerone A, azanigerone B first undergoes hydroxylation at C10, possibly catalyzed by one of the two FAD-dependent monooxygenases encoded in the cluster, azaG or azaL, resulting in the vicinal diol azanigerone C. Oxidative cleavage of azanigerone C by azaI would yield the corresponding aldehyde derivative of azanigerone A. Finally, the dehydrogenase azaJ is proposed to convert the aldehyde functional group into the carboxylic acid, completing the conversion from azanigerone B to azanigerone A. Alternatively, the oxidation of aldehyde to carboxylic acid may be catalyzed by the same P450 enzyme azaI via consecutive oxidation or by endogenous alcohol dehydrogenase. The protein is Acyl-CoA ligase azaF of Aspergillus niger (strain ATCC 1015 / CBS 113.46 / FGSC A1144 / LSHB Ac4 / NCTC 3858a / NRRL 328 / USDA 3528.7).